A 253-amino-acid chain; its full sequence is 2-C-methyl-D-erythritol 4-phosphate cytidylyltransferase (253 aa).

Belongs to the IspD/TarI cytidylyltransferase family. IspD subfamily.

The catalysed reaction is 2-C-methyl-D-erythritol 4-phosphate + CTP + H(+) = 4-CDP-2-C-methyl-D-erythritol + diphosphate. The protein operates within isoprenoid biosynthesis; isopentenyl diphosphate biosynthesis via DXP pathway; isopentenyl diphosphate from 1-deoxy-D-xylulose 5-phosphate: step 2/6. Catalyzes the formation of 4-diphosphocytidyl-2-C-methyl-D-erythritol from CTP and 2-C-methyl-D-erythritol 4-phosphate (MEP). This chain is 2-C-methyl-D-erythritol 4-phosphate cytidylyltransferase, found in Idiomarina loihiensis (strain ATCC BAA-735 / DSM 15497 / L2-TR).